The sequence spans 125 residues: Cystatin-like cysteine protease inhibitor EPIC2A (125 aa).

A signal peptide spans 1-21; the sequence is MSFLRPTLALLAVTALVTTSA. Asparagine 45 carries N-linked (GlcNAc...) asparagine glycosylation. The short motif at 68 to 72 is the Secondary area of contact element; the sequence is QVVSG.

It belongs to the cystatin family.

Its subcellular location is the secreted. Its function is as follows. Secreted effector that interacts with and inhibits host apoplastic pathogenesis-related papain-like cysteine proteases. Inhibition of host proteases by a pathogen extracellular protease inhibitor forms a specific type of defense-counterdefense mechanism between plants and microbial pathogens. This is Cystatin-like cysteine protease inhibitor EPIC2A from Phytophthora infestans (strain T30-4) (Potato late blight agent).